A 914-amino-acid polypeptide reads, in one-letter code: DNA mismatch repair protein MutS (914 aa).

Residues 28 to 74 (NTNSVKDSNLNDEELSKNAELRPRKRKKSVLLQNSVGEQTEDFSNDE) are disordered. Residue 726 to 733 (GPNASGKS) coordinates ATP.

Belongs to the DNA mismatch repair MutS family.

In terms of biological role, this protein is involved in the repair of mismatches in DNA. It is possible that it carries out the mismatch recognition step. This protein has a weak ATPase activity. In Prochlorococcus marinus (strain SARG / CCMP1375 / SS120), this protein is DNA mismatch repair protein MutS.